A 133-amino-acid chain; its full sequence is ATP synthase epsilon chain, chloroplastic (133 aa).

It belongs to the ATPase epsilon chain family. F-type ATPases have 2 components, CF(1) - the catalytic core - and CF(0) - the membrane proton channel. CF(1) has five subunits: alpha(3), beta(3), gamma(1), delta(1), epsilon(1). CF(0) has three main subunits: a, b and c.

The protein resides in the plastid. Its subcellular location is the chloroplast thylakoid membrane. In terms of biological role, produces ATP from ADP in the presence of a proton gradient across the membrane. This is ATP synthase epsilon chain, chloroplastic from Cyanidium caldarium (Red alga).